The chain runs to 180 residues: DNA replication regulator protein HobA (180 aa).

Residues glutamate 17, glutamate 27, glutamate 140, glutamate 143, and asparagine 176 each contribute to the Ca(2+) site.

As to quaternary structure, forms dimers and homotetramers. Interacts with domains I and II (residues 1-112) of DnaA. In a crystal with domains I and II of DnaA HobA forms tetramers with DnaA fragments bound at the dimer interface of the tetramer. Ca(2+) serves as cofactor.

In terms of biological role, required for DNA replication initiation. Increases binding of DnaA to oriC region. This is DNA replication regulator protein HobA from Helicobacter pylori (strain ATCC 700392 / 26695) (Campylobacter pylori).